The primary structure comprises 382 residues: ATP phosphoribosyltransferase regulatory subunit (382 aa).

This sequence belongs to the class-II aminoacyl-tRNA synthetase family. HisZ subfamily. As to quaternary structure, heteromultimer composed of HisG and HisZ subunits.

The protein resides in the cytoplasm. It functions in the pathway amino-acid biosynthesis; L-histidine biosynthesis; L-histidine from 5-phospho-alpha-D-ribose 1-diphosphate: step 1/9. In terms of biological role, required for the first step of histidine biosynthesis. May allow the feedback regulation of ATP phosphoribosyltransferase activity by histidine. This chain is ATP phosphoribosyltransferase regulatory subunit, found in Burkholderia cenocepacia (strain HI2424).